Reading from the N-terminus, the 353-residue chain is Draxin-B (353 aa).

The first 21 residues, 1-21 (MASSWCLPLALLVSNLAVSHS), serve as a signal peptide directing secretion. 3 disordered regions span residues 23 to 183 (EPSS…KEGS), 198 to 222 (TVMS…RGKV), and 246 to 268 (VDAW…SGNV). Residues 138–167 (GPHKGKAQGHGHHFDHRRHGGRRDKGRHTK) are compositionally biased toward basic residues. Residues 252–261 (SRKKDKRRSK) show a composition bias toward basic residues. Asn-262 and Asn-267 each carry an N-linked (GlcNAc...) asparagine glycan.

It belongs to the draxin family.

It localises to the secreted. Its function is as follows. Chemorepulsive axon guidance protein required for the development of spinal cord and forebrain commissures. Acts as a chemorepulsive guidance protein for commissural axons during development. Able to inhibit or repel neurite outgrowth from dorsal spinal cord. This chain is Draxin-B (draxin-B), found in Salmo salar (Atlantic salmon).